We begin with the raw amino-acid sequence, 1015 residues long: SKI family transcriptional corepressor 2 (1015 aa).

2 disordered regions span residues 280–316 and 518–934; these read HLLG…DDDD and GAAG…KKDV. Pro residues predominate over residues 284–295; sequence APPPPPPPPPPL. Over residues 575–600 the composition is skewed to low complexity; that stretch reads PPADSVAAAGAGAAAAGSGPAGSRVP. Residues 628–637 are compositionally biased toward basic and acidic residues; that stretch reads GGKDDAESLA. Over residues 653 to 669 the composition is skewed to basic residues; it reads HPHHHHHPHHHHHHHHP. Pro residues-rich tracts occupy residues 670–684 and 694–708; these read PQPP…PQPD and APPP…PPLA. Acidic residues-rich tracts occupy residues 730-745 and 754-774; these read DSSE…QEVD and GEEE…EETE. Over residues 793-803 the composition is skewed to basic and acidic residues; the sequence is PSEKGSSRDRA. Over residues 832-842 the composition is skewed to pro residues; the sequence is DLPPPPPPPLA. Composition is skewed to basic and acidic residues over residues 861–877, 885–899, and 912–922; these read PSLE…KTKE, TKDD…KEHS, and FWRERSGEHTQ.

The protein belongs to the SKI family. Interacts with SMAD2 and SMAD3. As to expression, expressed in cerebellum, spinal cord and testis. Isoform 2 is present in cerebellum (at protein level).

It localises to the nucleus. The protein localises to the cytoplasm. In terms of biological role, exhibits transcriptional repressor activity. Acts as a TGF-beta antagonist in the nervous system. This Homo sapiens (Human) protein is SKI family transcriptional corepressor 2.